The primary structure comprises 279 residues: Histone chaperone ASF1 (279 aa).

Positions 1 to 143 are interaction with HIR1; sequence MSIVSLLGIK…HIVRNILAEK (143 aa). The interaction with histone H3, histone H4, RAD53 and the RF-C complex stretch occupies residues 1 to 155; sequence MSIVSLLGIK…VTRFNIVWDN (155 aa). A disordered region spans residues 156–279; that stretch reads ENEGDLYPPE…TPKDAARSTN (124 aa). The span at 168–244 shows a compositional bias: acidic residues; the sequence is GVDDEEEEDD…DEEEGEEEVG (77 aa). A coiled-coil region spans residues 192 to 243; it reads DDQEDGEGEAEEAAEEEEEEEEKTEDNETNLEEEEEDIENSDGDEEEGEEEV. Composition is skewed to basic and acidic residues over residues 245-254 and 269-279; these read SVDKNEDGND and STPKDAARSTN.

This sequence belongs to the ASF1 family. In terms of assembly, interacts with histone H3/H4 heterodimers via both histone H3 and histone H4. Binds with higher affinity to H3/H4 heterodimers where histone H3 has been pre-acetylated on 'Lys-14'. Interacts with RAD53 and this may impair interaction with histones and chromatin assembly; the interaction is reduced upon activation of DNA damage or replication checkpoints which in turn promotes histone binding and chromatin assembly. Interacts with the CAC2 subunit of chromatin assembly factor 1 (CAF-1). Interacts with the HIR1, HIR2, HIR3 and HPC2 subunits of the HIR complex. Interacts with the RFC1, RFC2, RFC3, RFC4 and RFC5 subunits of the replication factor C (RF-C/RFC) complex; which may recruit this protein to DNA. Interacts with the SAS2, SAS4 and SAS5 subunits of the SAS/SAS-I complex. Interacts with the BDF1, BDF2, SPT15, TAF1 and TAF7 subunits of the TFIID complex. Interacts with RTT109 and VPS75; the interaction with RTT109 is direct.

It localises to the nucleus. Histone chaperone that facilitates histone deposition and histone exchange and removal during nucleosome assembly and disassembly. Facilitates histone deposition through both replication-dependent and replication-independent chromatin assembly pathways. Cooperates with chromatin assembly factor 1 (CAF-1) to promote replication-dependent chromatin assembly and with the HIR complex to promote replication-independent chromatin assembly, which may occur during transcription and DNA repair. May be required for the maintenance of a subset of replication elongation factors, including DNA polymerase epsilon, the RFC complex and PCNA, at stalled replication forks. Also required for RTT109-dependent acetylation of histone H3 on 'Lys-9' and 'Lys-56'. Promotion of RTT109-mediated histone H3 'Lys-56' acetylation is dependent on interactions with histone H3 pre-acetylated on 'Lys-14'. This chain is Histone chaperone ASF1, found in Saccharomyces cerevisiae (strain ATCC 204508 / S288c) (Baker's yeast).